We begin with the raw amino-acid sequence, 388 residues long: N5-carboxyaminoimidazole ribonucleotide synthase (388 aa).

ATP is bound by residues lysine 105, lysine 140, 174–177, glutamate 182, and 267–268; these read ESFV and NE. The 189-residue stretch at 109–297 folds into the ATP-grasp domain; that stretch reads RHFLQNLGLP…QFALQLQAVT (189 aa).

This sequence belongs to the PurK/PurT family. In terms of assembly, homodimer.

It carries out the reaction 5-amino-1-(5-phospho-beta-D-ribosyl)imidazole + hydrogencarbonate + ATP = 5-carboxyamino-1-(5-phospho-D-ribosyl)imidazole + ADP + phosphate + 2 H(+). It functions in the pathway purine metabolism; IMP biosynthesis via de novo pathway; 5-amino-1-(5-phospho-D-ribosyl)imidazole-4-carboxylate from 5-amino-1-(5-phospho-D-ribosyl)imidazole (N5-CAIR route): step 1/2. Its function is as follows. Catalyzes the ATP-dependent conversion of 5-aminoimidazole ribonucleotide (AIR) and HCO(3)(-) to N5-carboxyaminoimidazole ribonucleotide (N5-CAIR). This Synechocystis sp. (strain ATCC 27184 / PCC 6803 / Kazusa) protein is N5-carboxyaminoimidazole ribonucleotide synthase.